The primary structure comprises 36 residues: Photosystem II reaction center protein Y (36 aa).

The Lumenal segment spans residues 1–4 (MDTR). A helical membrane pass occupies residues 5–23 (LLVIAAPVLVAASWALFNI). Over 24 to 36 (GRLAIQQIQRLSR) the chain is Stromal.

The protein belongs to the PsbY family. PSII is composed of 1 copy each of membrane proteins PsbA, PsbB, PsbC, PsbD, PsbE, PsbF, PsbH, PsbI, PsbJ, PsbK, PsbL, PsbM, PsbT, PsbX, PsbY, PsbZ, Psb30/Ycf12, at least 3 peripheral proteins of the oxygen-evolving complex and a large number of cofactors. It forms dimeric complexes.

It is found in the plastid. The protein localises to the chloroplast thylakoid membrane. Its function is as follows. Loosely associated component of the core of photosystem II (PSII), it is not always seen in crystals. PSII is a light-driven water plastoquinone oxidoreductase, using light energy to abstract electrons from H(2)O, generating a proton gradient subsequently used for ATP formation. The protein is Photosystem II reaction center protein Y of Thalassiosira pseudonana (Marine diatom).